A 640-amino-acid polypeptide reads, in one-letter code: Paramyosin, short form (640 aa).

Nonhelical region regions lie at residues 1–122 (MALA…PDTV) and 420–640 (KLEQ…TITE). Residues 123 to 619 (VERSRQRRRR…IIRAKHRTFV (497 aa)) are a coiled coil.

This sequence belongs to the paramyosin family. In terms of processing, phosphorylated. In terms of tissue distribution, found in all adult muscle tissues except in indirect flight muscles and a set of temporary abdominal muscles. Not detected in larval muscle.

It localises to the cytoplasm. The protein resides in the myofibril. In terms of biological role, paramyosin is a major structural component of many thick filaments isolated from invertebrate muscles. In Drosophila melanogaster (Fruit fly), this protein is Paramyosin, short form (Prm).